The primary structure comprises 270 residues: Phosphatidylglycerol--prolipoprotein diacylglyceryl transferase (270 aa).

A run of 4 helical transmembrane segments spans residues 19–39 (FPVYWYGIIIGTGVLLGLWLA), 53–73 (FVDLVLFAVPIAIICARAYYV), 92–112 (QGGLAIHGGLIGAVMTGIIYA), and 117–137 (ISFWKLADIAAPSILLGQAIG). R138 serves as a coordination point for a 1,2-diacyl-sn-glycero-3-phospho-(1'-sn-glycerol). The next 3 helical transmembrane spans lie at 178 to 198 (HPTFLYESLWSFAGVILLLLL), 206 to 226 (GELFFTYLIWYSIGRFFVEEL), and 236 to 256 (LRIAQVMSIGLIVISIIFIIV).

Belongs to the Lgt family.

Its subcellular location is the cell membrane. The enzyme catalyses L-cysteinyl-[prolipoprotein] + a 1,2-diacyl-sn-glycero-3-phospho-(1'-sn-glycerol) = an S-1,2-diacyl-sn-glyceryl-L-cysteinyl-[prolipoprotein] + sn-glycerol 1-phosphate + H(+). It functions in the pathway protein modification; lipoprotein biosynthesis (diacylglyceryl transfer). Functionally, catalyzes the transfer of the diacylglyceryl group from phosphatidylglycerol to the sulfhydryl group of the N-terminal cysteine of a prolipoprotein, the first step in the formation of mature lipoproteins. The polypeptide is Phosphatidylglycerol--prolipoprotein diacylglyceryl transferase (Bacillus cytotoxicus (strain DSM 22905 / CIP 110041 / 391-98 / NVH 391-98)).